The following is a 325-amino-acid chain: Lipoyl synthase (325 aa).

Positions 1–31 (MANLIDNTARSAASDARAARHPEKQKRADTP) are disordered. A compositionally biased stretch (basic and acidic residues) spans 17–31 (RAARHPEKQKRADTP). The [4Fe-4S] cluster site is built by Cys65, Cys70, Cys76, Cys91, Cys95, Cys98, and Ser304. A Radical SAM core domain is found at 77-293 (WEQKHATFMI…ETIARAKGFL (217 aa)).

Belongs to the radical SAM superfamily. Lipoyl synthase family. It depends on [4Fe-4S] cluster as a cofactor.

It is found in the cytoplasm. It carries out the reaction [[Fe-S] cluster scaffold protein carrying a second [4Fe-4S](2+) cluster] + N(6)-octanoyl-L-lysyl-[protein] + 2 oxidized [2Fe-2S]-[ferredoxin] + 2 S-adenosyl-L-methionine + 4 H(+) = [[Fe-S] cluster scaffold protein] + N(6)-[(R)-dihydrolipoyl]-L-lysyl-[protein] + 4 Fe(3+) + 2 hydrogen sulfide + 2 5'-deoxyadenosine + 2 L-methionine + 2 reduced [2Fe-2S]-[ferredoxin]. It functions in the pathway protein modification; protein lipoylation via endogenous pathway; protein N(6)-(lipoyl)lysine from octanoyl-[acyl-carrier-protein]: step 2/2. Catalyzes the radical-mediated insertion of two sulfur atoms into the C-6 and C-8 positions of the octanoyl moiety bound to the lipoyl domains of lipoate-dependent enzymes, thereby converting the octanoylated domains into lipoylated derivatives. In Maricaulis maris (strain MCS10) (Caulobacter maris), this protein is Lipoyl synthase.